Reading from the N-terminus, the 61-residue chain is Large ribosomal subunit protein bL28 (61 aa).

Residues 1–27 (MAKDFVTGKKTTFGNTRSHALNSSSRS) form a disordered region. The span at 9–27 (KKTTFGNTRSHALNSSSRS) shows a compositional bias: polar residues.

It belongs to the bacterial ribosomal protein bL28 family.

This chain is Large ribosomal subunit protein bL28, found in Lactobacillus delbrueckii subsp. bulgaricus (strain ATCC 11842 / DSM 20081 / BCRC 10696 / JCM 1002 / NBRC 13953 / NCIMB 11778 / NCTC 12712 / WDCM 00102 / Lb 14).